The primary structure comprises 457 residues: Cysteine--tRNA ligase (457 aa).

Cysteine 28 is a Zn(2+) binding site. A 'HIGH' region motif is present at residues 30–40 (ITVYDLCHIGH). The Zn(2+) site is built by cysteine 209, histidine 234, and glutamate 238. Positions 266-270 (KMSKS) match the 'KMSKS' region motif. Lysine 269 lines the ATP pocket.

The protein belongs to the class-I aminoacyl-tRNA synthetase family. As to quaternary structure, monomer. Zn(2+) serves as cofactor.

The protein localises to the cytoplasm. It catalyses the reaction tRNA(Cys) + L-cysteine + ATP = L-cysteinyl-tRNA(Cys) + AMP + diphosphate. This Sodalis glossinidius (strain morsitans) protein is Cysteine--tRNA ligase.